The sequence spans 87 residues: Small ribosomal subunit protein bS20 (87 aa).

Positions 1–22 (MAHHKSAIKRIKQNAKKNARNR) are disordered.

Belongs to the bacterial ribosomal protein bS20 family.

Its function is as follows. Binds directly to 16S ribosomal RNA. The sequence is that of Small ribosomal subunit protein bS20 from Pelobacter propionicus (strain DSM 2379 / NBRC 103807 / OttBd1).